We begin with the raw amino-acid sequence, 889 residues long: Putative receptor-like protein kinase At3g46340 (889 aa).

A signal peptide spans 1–25 (MEFPHSVLLVVLIIATFAISNLVQA). At 26–514 (EEDQEGFISL…VITKKKFPVM (489 aa)) the chain is on the extracellular side. Residues asparagine 185, asparagine 239, asparagine 259, asparagine 292, asparagine 316, asparagine 342, asparagine 366, asparagine 419, asparagine 435, asparagine 448, asparagine 467, and asparagine 474 are each glycosylated (N-linked (GlcNAc...) asparagine). LRR repeat units lie at residues 414 to 437 (RITSLNLSSTGLTGNIAAGIQNLT), 438 to 460 (HLDKLDLSNNNLTGGVPEFLASM), and 462 to 483 (SLSFINLSKNNLNGSIPQALLK). A helical membrane pass occupies residues 515 to 535 (IVALVSSAVVVILVVLVLIFV). Topologically, residues 536–889 (FKKKKPSNLE…FDTKAVPSAR (354 aa)) are cytoplasmic. Residues 544-566 (LEDLPPSSNTPRENITSTSISDT) are disordered. The Protein kinase domain occupies 585–874 (KNLQRPLGEG…TQGMDSHSSF (290 aa)). ATP-binding positions include 591–599 (LGEGGFGVV) and lysine 614. Position 659 is a phosphotyrosine (tyrosine 659). Aspartate 711 acts as the Proton acceptor in catalysis. Serine 745 carries the post-translational modification Phosphoserine. Residues threonine 746 and threonine 751 each carry the phosphothreonine modification. Tyrosine 759 is subject to Phosphotyrosine. Residues 863 to 889 (NKTQGMDSHSSFEQSMSFDTKAVPSAR) are disordered. A compositionally biased stretch (polar residues) spans 864 to 880 (KTQGMDSHSSFEQSMSF).

It belongs to the protein kinase superfamily. Ser/Thr protein kinase family.

It localises to the cell membrane. The enzyme catalyses L-seryl-[protein] + ATP = O-phospho-L-seryl-[protein] + ADP + H(+). It catalyses the reaction L-threonyl-[protein] + ATP = O-phospho-L-threonyl-[protein] + ADP + H(+). The protein is Putative receptor-like protein kinase At3g46340 of Arabidopsis thaliana (Mouse-ear cress).